The sequence spans 295 residues: Tyrosine recombinase XerC (295 aa).

In terms of domain architecture, Core-binding (CB) spans 1-84; it reads MTLEEQFLSY…SLKSFYRLLT (84 aa). In terms of domain architecture, Tyr recombinase spans 105–289; it reads KLPEFFYQDE…SMQHLTAEYR (185 aa). Residues Arg145, Lys169, His241, Arg244, and His267 contribute to the active site. Catalysis depends on Tyr276, which acts as the O-(3'-phospho-DNA)-tyrosine intermediate.

The protein belongs to the 'phage' integrase family. XerC subfamily. Forms a cyclic heterotetrameric complex composed of two molecules of XerC and two molecules of XerD.

Its subcellular location is the cytoplasm. In terms of biological role, site-specific tyrosine recombinase, which acts by catalyzing the cutting and rejoining of the recombining DNA molecules. The XerC-XerD complex is essential to convert dimers of the bacterial chromosome into monomers to permit their segregation at cell division. It also contributes to the segregational stability of plasmids. This Lactobacillus leichmannii protein is Tyrosine recombinase XerC.